The chain runs to 527 residues: GMP synthase [glutamine-hydrolyzing] (527 aa).

The region spanning Thr-13–Lys-202 is the Glutamine amidotransferase type-1 domain. Cys-89 functions as the Nucleophile in the catalytic mechanism. Active-site residues include His-176 and Glu-178. Residues Trp-203–Arg-402 enclose the GMPS ATP-PPase domain. Ser-231–Thr-237 lines the ATP pocket. Residues Arg-304, Asp-464, Lys-519, and Glu-525 each coordinate XMP.

In terms of assembly, homodimer. Mg(2+) is required as a cofactor.

The protein resides in the cytoplasm. It is found in the cytosol. It catalyses the reaction XMP + L-glutamine + ATP + H2O = GMP + L-glutamate + AMP + diphosphate + 2 H(+). It functions in the pathway purine metabolism; GMP biosynthesis; GMP from XMP (L-Gln route): step 1/1. In terms of biological role, catalyzes the conversion of xanthine monophosphate (XMP) to GMP in the presence of glutamine and ATP through an adenyl-XMP intermediate. In Yarrowia lipolytica (strain CLIB 122 / E 150) (Yeast), this protein is GMP synthase [glutamine-hydrolyzing] (GUA1).